The sequence spans 130 residues: Small ribosomal subunit protein uS9 (130 aa).

It belongs to the universal ribosomal protein uS9 family.

In Burkholderia pseudomallei (strain K96243), this protein is Small ribosomal subunit protein uS9.